A 294-amino-acid chain; its full sequence is NAD kinase (294 aa).

The Proton acceptor role is filled by Asp74. Residues 74-75 (DG), 148-149 (ND), Arg159, Arg176, Asp178, 189-194 (TAYALS), and Gln247 contribute to the NAD(+) site.

This sequence belongs to the NAD kinase family. Requires a divalent metal cation as cofactor.

It localises to the cytoplasm. The catalysed reaction is NAD(+) + ATP = ADP + NADP(+) + H(+). Functionally, involved in the regulation of the intracellular balance of NAD and NADP, and is a key enzyme in the biosynthesis of NADP. Catalyzes specifically the phosphorylation on 2'-hydroxyl of the adenosine moiety of NAD to yield NADP. The protein is NAD kinase of Azoarcus sp. (strain BH72).